Reading from the N-terminus, the 1184-residue chain is Non-receptor tyrosine-protein kinase TYK2 (1184 aa).

The 398-residue stretch at leucine 33–serine 430 folds into the FERM domain. The interval cysteine 294–proline 368 is disordered. Tyrosine 295 is subject to Phosphotyrosine. In terms of domain architecture, SH2; atypical spans glycine 449–leucine 529. Residue serine 525 is modified to Phosphoserine. Positions isoleucine 589–leucine 866 constitute a Protein kinase 1 domain. Tyrosine 604 bears the Phosphotyrosine mark. Serine 881 is subject to Phosphoserine. One can recognise a Protein kinase 2 domain in the interval leucine 894–leucine 1166. Residues leucine 900–valine 908 and lysine 927 each bind ATP. Aspartate 1020 (proton acceptor) is an active-site residue. Tyrosine 1051 carries the post-translational modification Phosphotyrosine; by autocatalysis. Tyrosine 1052 is modified (phosphotyrosine).

The protein belongs to the protein kinase superfamily. Tyr protein kinase family. JAK subfamily. As to quaternary structure, interacts (via FERM domain) with JAKMIP1. Interacts with PIK3R1; this interaction is important for cell migration. Interacts with MPL/TPOR. Phosphorylation by JAK1 at Tyr-1051 and Tyr-1052 induces kinase activation.

The catalysed reaction is L-tyrosyl-[protein] + ATP = O-phospho-L-tyrosyl-[protein] + ADP + H(+). The protein kinase 1 domain (also termed pseudokinase domain) mediates autoinhibition of the TYK2 kinase domain. Its function is as follows. Tyrosine kinase of the non-receptor type involved in numerous cytokines and interferons signaling, which regulates cell growth, development, cell migration, innate and adaptive immunity. Plays both structural and catalytic roles in numerous interleukins and interferons (IFN-alpha/beta) signaling. Associates with heterodimeric cytokine receptor complexes and activates STAT family members including STAT1, STAT3, STAT4 or STAT6. The heterodimeric cytokine receptor complexes are composed of (1) a TYK2-associated receptor chain (IFNAR1, IL12RB1, IL10RB or IL13RA1), and (2) a second receptor chain associated either with JAK1 or JAK2. In response to cytokine-binding to receptors, phosphorylates and activates receptors (IFNAR1, IL12RB1, IL10RB or IL13RA1), creating docking sites for STAT members. In turn, recruited STATs are phosphorylated by TYK2 (or JAK1/JAK2 on the second receptor chain), form homo- and heterodimers, translocate to the nucleus, and regulate cytokine/growth factor responsive genes. Negatively regulates STAT3 activity by promototing phosphorylation at a specific tyrosine that differs from the site used for signaling. The sequence is that of Non-receptor tyrosine-protein kinase TYK2 from Mus musculus (Mouse).